Reading from the N-terminus, the 264-residue chain is 5'-nucleotidase SurE (264 aa).

The a divalent metal cation site is built by D10, D11, S43, and N99.

Belongs to the SurE nucleotidase family. A divalent metal cation serves as cofactor.

Its subcellular location is the cytoplasm. It catalyses the reaction a ribonucleoside 5'-phosphate + H2O = a ribonucleoside + phosphate. Nucleotidase that shows phosphatase activity on nucleoside 5'-monophosphates. The chain is 5'-nucleotidase SurE from Methanococcus maripaludis (strain C7 / ATCC BAA-1331).